The primary structure comprises 365 residues: Transcription factor aptf-1 (365 aa).

Disordered regions lie at residues 13–40 and 93–126; these read EFVR…PFYE and TPPQ…SNYS. Residues 223-356 form an H-S-H (helix-span-helix), dimerization region; it reads RRKQANVTAW…MIDESIKYID (134 aa).

The protein belongs to the AP-2 family. Binds DNA as a dimer. In terms of tissue distribution, expressed in five interneurons AIB, RIB and RIS.

Its subcellular location is the nucleus. Functionally, transcription factor, which is required in the single sleep-active ring interneuron RIS for sleep-like behavioral quiescence induced by neuropeptide signaling in larvae. Regulates gene expression of sleep-inducing FMRFamide-like neuropeptide flp-11 in RIS. This chain is Transcription factor aptf-1, found in Caenorhabditis elegans.